Consider the following 91-residue polypeptide: Peptide Ctry2146 (91 aa).

The first 23 residues, 1 to 23, serve as a signal peptide directing secretion; it reads MKTQTLLVTFLVVLLMVATQTEA. A Leucine amide modification is found at Leu33. Residues 37 to 91 constitute a propeptide that is removed on maturation; it reads GLLDGLLGKRGLLFGKRGPLFGKRALTNQDFLDFAYDPSLSAADMDALEMLFEDY.

This sequence belongs to the non-disulfide-bridged peptide (NDBP) superfamily. Short antimicrobial peptide (group 4) family. Expressed by the venom gland.

It is found in the secreted. The protein resides in the target cell membrane. Antimicrobial peptide. In Chaerilus tryznai (Scorpion), this protein is Peptide Ctry2146.